The following is a 456-amino-acid chain: Tyrosinase-like protein (456 aa).

Residues 1 to 22 (MNTMTLLGKVFLLQFLIGVGFC) form the signal peptide. The Cu cation site is built by His-145, His-154, His-163, His-295, His-299, and His-322.

The protein belongs to the tyrosinase family. The cofactor is Cu(2+). As to expression, prismatic layer of shell (at protein level).

It is found in the secreted. The sequence is that of Tyrosinase-like protein from Pinctada maxima (Silver-lipped pearl oyster).